A 394-amino-acid chain; its full sequence is Elongation factor Tu (394 aa).

A tr-type G domain is found at K10–Q205. The tract at residues G19–T26 is G1. A GTP-binding site is contributed by G19–T26. T26 is a Mg(2+) binding site. The interval G61–N65 is G2. Residues D82–G85 are G3. GTP-binding positions include D82–H86 and N137–D140. The tract at residues N137 to D140 is G4. The interval S173–F175 is G5.

Belongs to the TRAFAC class translation factor GTPase superfamily. Classic translation factor GTPase family. EF-Tu/EF-1A subfamily. As to quaternary structure, monomer.

It is found in the cytoplasm. It catalyses the reaction GTP + H2O = GDP + phosphate + H(+). Functionally, GTP hydrolase that promotes the GTP-dependent binding of aminoacyl-tRNA to the A-site of ribosomes during protein biosynthesis. The protein is Elongation factor Tu of Borrelia turicatae (strain 91E135).